The chain runs to 96 residues: Mitochondrial import inner membrane translocase subunit Tim13-B (96 aa).

The Twin CX3C motif signature appears at 47–70 (CFRKCIGKPGGSLDNSEQKCVAMC). 2 disulfide bridges follow: Cys47–Cys70 and Cys51–Cys66.

The protein belongs to the small Tim family. Heterohexamer; composed of 3 copies of TIMM8 (TIMM8A or TIMM8B) and 3 copies of TIMM13, named soluble 70 kDa complex. Associates with the TIM22 complex, whose core is composed of TIMM22.

It is found in the mitochondrion inner membrane. Its function is as follows. Mitochondrial intermembrane chaperone that participates in the import and insertion of some multi-pass transmembrane proteins into the mitochondrial inner membrane. Also required for the transfer of beta-barrel precursors from the TOM complex to the sorting and assembly machinery (SAM complex) of the outer membrane. Acts as a chaperone-like protein that protects the hydrophobic precursors from aggregation and guide them through the mitochondrial intermembrane space. The TIMM8-TIMM13 complex mediates the import of some proteins while the predominant TIMM9-TIMM10 70 kDa complex mediates the import of much more proteins. The protein is Mitochondrial import inner membrane translocase subunit Tim13-B (timm13-b) of Xenopus laevis (African clawed frog).